Here is a 190-residue protein sequence, read N- to C-terminus: Adenine phosphoribosyltransferase (190 aa).

The protein belongs to the purine/pyrimidine phosphoribosyltransferase family. As to quaternary structure, homodimer.

The protein resides in the cytoplasm. The catalysed reaction is AMP + diphosphate = 5-phospho-alpha-D-ribose 1-diphosphate + adenine. The protein operates within purine metabolism; AMP biosynthesis via salvage pathway; AMP from adenine: step 1/1. Catalyzes a salvage reaction resulting in the formation of AMP, that is energically less costly than de novo synthesis. The polypeptide is Adenine phosphoribosyltransferase (Cupriavidus taiwanensis (strain DSM 17343 / BCRC 17206 / CCUG 44338 / CIP 107171 / LMG 19424 / R1) (Ralstonia taiwanensis (strain LMG 19424))).